Reading from the N-terminus, the 164-residue chain is Cold-inducible RNA-binding protein (164 aa).

The RRM domain maps to 6–84 (GKLFVGGLSF…RQIRVDQAGK (79 aa)). A disordered region spans residues 65–164 (AGMNGKTVDG…SYRDSYDSYG (100 aa)). Gly residues predominate over residues 93-118 (YRGGSSGGGRGFFRGGRGRGGGGYGG). Residues 155–164 (SYRDSYDSYG) show a composition bias toward basic and acidic residues.

As to quaternary structure, interacts with prmt1. Interacts with elavl1/elrA (via RRM3). Associates with ribosomes. In terms of processing, methylated on arginine residues within RGG motifs. Methylation by prmt1 promotes cytoplasmic accumulation.

It is found in the nucleus. The protein localises to the nucleoplasm. It localises to the cytoplasm. Its function is as follows. Cold-inducible mRNA binding protein. Acts cooperatively with elavl1/elrA to stabilize AU-rich element (ARE)-containing mRNAs by binding to them and inhibiting their deadenylation. Essential for embryonic gastrulation and neural development, acting to maintain the expression of a set of adhesion molecules, and cell movement during embryogenesis. Required for pronephros development. May play a role in hibernation. This Aquarana catesbeiana (American bullfrog) protein is Cold-inducible RNA-binding protein.